Here is a 1304-residue protein sequence, read N- to C-terminus: DNA-directed RNA polymerase subunit beta' (1304 aa).

The disordered stretch occupies residues 1–23 (MSEKGRFSAGLSRQAADGNKADA). The Zn(2+) site is built by Cys241, Cys315, Cys322, and Cys325. Acidic residues predominate over residues 1256-1268 (AAEPEPDEEEEEP). Positions 1256–1304 (AAEPEPDEEEEEPAVLPELPPRLILEDDQLIDDSTPAFDELEEDDDEEE) are disordered. A compositionally biased stretch (low complexity) spans 1269-1278 (AVLPELPPRL). Positions 1294–1304 (DELEEDDDEEE) are enriched in acidic residues.

It belongs to the RNA polymerase beta' chain family. RpoC2 subfamily. As to quaternary structure, in cyanobacteria the RNAP catalytic core is composed of 2 alpha, 1 beta, 1 beta', 1 gamma and 1 omega subunit. When a sigma factor is associated with the core the holoenzyme is formed, which can initiate transcription. Requires Zn(2+) as cofactor.

It carries out the reaction RNA(n) + a ribonucleoside 5'-triphosphate = RNA(n+1) + diphosphate. Its function is as follows. DNA-dependent RNA polymerase catalyzes the transcription of DNA into RNA using the four ribonucleoside triphosphates as substrates. The protein is DNA-directed RNA polymerase subunit beta' of Synechococcus sp. (strain JA-2-3B'a(2-13)) (Cyanobacteria bacterium Yellowstone B-Prime).